Consider the following 234-residue polypeptide: 2,3,4,5-tetrahydropyridine-2,6-dicarboxylate N-acetyltransferase (234 aa).

This sequence belongs to the transferase hexapeptide repeat family. DapH subfamily.

The catalysed reaction is (S)-2,3,4,5-tetrahydrodipicolinate + acetyl-CoA + H2O = L-2-acetamido-6-oxoheptanedioate + CoA. It functions in the pathway amino-acid biosynthesis; L-lysine biosynthesis via DAP pathway; LL-2,6-diaminopimelate from (S)-tetrahydrodipicolinate (acetylase route): step 1/3. Its function is as follows. Catalyzes the transfer of an acetyl group from acetyl-CoA to tetrahydrodipicolinate. This is 2,3,4,5-tetrahydropyridine-2,6-dicarboxylate N-acetyltransferase from Ligilactobacillus salivarius (strain UCC118) (Lactobacillus salivarius).